A 334-amino-acid polypeptide reads, in one-letter code: L-lactate dehydrogenase B chain (334 aa).

Ala-2 carries the N-acetylalanine modification. Lys-7 carries the post-translational modification N6-acetyllysine. NAD(+) is bound at residue 31-53 (QVGMACAISILGKSLADELALVD). At Ser-44 the chain carries Phosphoserine. Residue Lys-58 is modified to N6-acetyllysine. Arg-100 contributes to the NAD(+) binding site. A substrate-binding site is contributed by Arg-107. Lys-119 is subject to N6-acetyllysine. Asn-139 provides a ligand contact to NAD(+). Substrate is bound by residues Asn-139 and Arg-170. Residue His-194 is the Proton acceptor of the active site. A Phosphotyrosine modification is found at Tyr-240. Thr-249 contacts substrate. Lys-329 carries the N6-acetyllysine modification.

It belongs to the LDH/MDH superfamily. LDH family. Homotetramer. Interacts with PTEN upstream reading frame protein MP31; the interaction leads to inhibition of mitochondrial lactate dehydrogenase activity, preventing conversion of lactate to pyruvate in mitochondria. Predominantly expressed in aerobic tissues such as cardiac muscle.

The protein resides in the cytoplasm. It localises to the mitochondrion inner membrane. It carries out the reaction (S)-lactate + NAD(+) = pyruvate + NADH + H(+). It participates in fermentation; pyruvate fermentation to lactate; (S)-lactate from pyruvate: step 1/1. Functionally, interconverts simultaneously and stereospecifically pyruvate and lactate with concomitant interconversion of NADH and NAD(+). The chain is L-lactate dehydrogenase B chain (LDHB) from Homo sapiens (Human).